We begin with the raw amino-acid sequence, 443 residues long: F-box only protein 39 (443 aa).

The 47-residue stretch at 13–59 folds into the F-box domain; it reads QSCWATLPDVCLRRVFWWLGDRDRSRAALVCRKWNQIMYSADLWRYR.

In terms of assembly, directly interacts with SKP1 and CUL1.

In terms of biological role, substrate-recognition component of the SCF (SKP1-CUL1-F-box protein)-type E3 ubiquitin ligase complex. This is F-box only protein 39 (Fbxo39) from Mus musculus (Mouse).